The chain runs to 1093 residues: MRDVPKSLGLSVTTPGGSSGAPDSGRHNSLEEINLDQFLKTSNYEDTVKQLDIYYGIVKRQLLRYQSPITGLFPVMSTDQVVGSVRDSVYCASAVWSLYQAYRRIDDDRGKSYELGQSTVKCMRGILECWVKQASRVELFKQRQSNQHALHSKFQLHTGEKIYPDEFYNHLQIDCVSLYLLFLVQMITSGLQIIYTHDEVAFVQNLVYYVERAYRTPDFGMWERGSKYNNGTPEIHASSIGMAKSALEAINGCNLFGEKGASWSVVYVDIDAHNRNRSIFETMLPRESSSKGVDASLLLTLSFPAFASHEDRLVEQTKQNVVNRLRCKMGFKRFTRDGFLSKNEDKSRRYYHSGELKEFEGLECEWPLFFIAMIIDGVFKNNNEQIEEFQNDLRRCLRTDVNGDPVVTMYYAPDGDGSYMRAPSQSLFLWGQSFFIIAQLLTAGLLHINELDPIRRYLPSYNRPRRAGRYSAFQGTATDLVVQIVLIAESMRLQAMMATYGIQTQTPHEVEPVQIWSSTELIKVYQHLGVNNKVGLSGRPCRPVGSLGTSKVYRICGMTVLCYPLIFEVSDFYLYRDMALLIDDIKTELQFVGKYWRLSGRPTVCLLIREEHMRDPQFKEMLDLLAMLKKGYCDGMKVRIGRLQNLISSSCIEHLDFMNQSDLTDNENAFSQINHEYIGYQSLTDVPKALTYVEEKISVAHFDTKPTPDIINALRSTDSIYCLCQLWGIILNREGPHFEVNGLNVNTALTQLYHRAGSLRYWRAVRYCSSLLHHIVDSISPFITTVLVNGKELTVGIIGQKETVFDKPMTPAEIQNVMYTSVQPYDVIQAVLQQEVVLYCGRLIATNPSMFRGILKIRIGWVLEAMRIYLQISGQQSIDVDNLSPFQVRILLQKVLTVSEWAVEEKLTTLQRRQLEGCLCRVPKHFYNKIWEILQRTPQGILTQGHHLPATPTLTNMSRGELTFNLLVEETLICIDRPERRQITVELLCIVATILNRNPELHFKQALDLDGILAEAFAMYCKDNNIQHQPKPEHEQTKNEDLKAFYSLPYSETTGYLARAAVNKVLQGGIFSTNEEDVQLDGDRLHDDNCKVS.

Positions 1–27 are disordered; the sequence is MRDVPKSLGLSVTTPGGSSGAPDSGRH. Calmodulin-binding regions lie at residues 6-27, 751-778, and 905-936; these read KSLG…SGRH, QLYH…IVDS, and EKLT…ILQR. C1090 carries S-farnesyl cysteine lipidation.

Belongs to the phosphorylase b kinase regulatory chain family. Although the final Cys may be farnesylated, the terminal tripeptide is probably not removed, and the C-terminus is not methylated.

The protein resides in the cell membrane. It functions in the pathway glycan biosynthesis; glycogen metabolism. Functionally, phosphorylase b kinase catalyzes the phosphorylation of serine in certain substrates, including troponin I. The beta chain acts as a regulatory unit and modulates the activity of the holoenzyme in response to phosphorylation. The polypeptide is Probable phosphorylase b kinase regulatory subunit beta (Drosophila melanogaster (Fruit fly)).